Here is a 582-residue protein sequence, read N- to C-terminus: Proline--tRNA ligase (582 aa).

The protein belongs to the class-II aminoacyl-tRNA synthetase family. ProS type 1 subfamily. In terms of assembly, homodimer.

It localises to the cytoplasm. The enzyme catalyses tRNA(Pro) + L-proline + ATP = L-prolyl-tRNA(Pro) + AMP + diphosphate. In terms of biological role, catalyzes the attachment of proline to tRNA(Pro) in a two-step reaction: proline is first activated by ATP to form Pro-AMP and then transferred to the acceptor end of tRNA(Pro). As ProRS can inadvertently accommodate and process non-cognate amino acids such as alanine and cysteine, to avoid such errors it has two additional distinct editing activities against alanine. One activity is designated as 'pretransfer' editing and involves the tRNA(Pro)-independent hydrolysis of activated Ala-AMP. The other activity is designated 'posttransfer' editing and involves deacylation of mischarged Ala-tRNA(Pro). The misacylated Cys-tRNA(Pro) is not edited by ProRS. The protein is Proline--tRNA ligase of Mycobacterium bovis (strain ATCC BAA-935 / AF2122/97).